The sequence spans 128 residues: Aspartate 1-decarboxylase (128 aa).

Serine 25 serves as the catalytic Schiff-base intermediate with substrate; via pyruvic acid. A Pyruvic acid (Ser) modification is found at serine 25. Threonine 57 lines the substrate pocket. Residue tyrosine 58 is the Proton donor of the active site. A substrate-binding site is contributed by 73-75 (GSA).

This sequence belongs to the PanD family. In terms of assembly, heterooctamer of four alpha and four beta subunits. It depends on pyruvate as a cofactor. Is synthesized initially as an inactive proenzyme, which is activated by self-cleavage at a specific serine bond to produce a beta-subunit with a hydroxyl group at its C-terminus and an alpha-subunit with a pyruvoyl group at its N-terminus.

It is found in the cytoplasm. The enzyme catalyses L-aspartate + H(+) = beta-alanine + CO2. It participates in cofactor biosynthesis; (R)-pantothenate biosynthesis; beta-alanine from L-aspartate: step 1/1. Catalyzes the pyruvoyl-dependent decarboxylation of aspartate to produce beta-alanine. This Paraburkholderia phytofirmans (strain DSM 17436 / LMG 22146 / PsJN) (Burkholderia phytofirmans) protein is Aspartate 1-decarboxylase.